We begin with the raw amino-acid sequence, 340 residues long: NADH-quinone oxidoreductase subunit H (340 aa).

Helical transmembrane passes span 4 to 24 (TIGILIWIIIKILVIVVPLLI), 78 to 98 (YLFVIAPLFALVPSLVGWAVI), 113 to 133 (VLYLFAMSSLGVYGVLIAGWA), 151 to 171 (VSYEIAMGFALVGVLLAAGSM), 184 to 204 (MLHWWFIPLLPLFLVFWIAGI), 244 to 264 (SMILISTFMAILFMGGWLSPF), 273 to 293 (IFFVVPGFVWLLLKISFFLFV), and 316 to 336 (VLIPVTIVWLIVTSLMVVAHV).

It belongs to the complex I subunit 1 family. NDH-1 is composed of 14 different subunits. Subunits NuoA, H, J, K, L, M, N constitute the membrane sector of the complex.

The protein resides in the cell inner membrane. The enzyme catalyses a quinone + NADH + 5 H(+)(in) = a quinol + NAD(+) + 4 H(+)(out). In terms of biological role, NDH-1 shuttles electrons from NADH, via FMN and iron-sulfur (Fe-S) centers, to quinones in the respiratory chain. The immediate electron acceptor for the enzyme in this species is believed to be ubiquinone. Couples the redox reaction to proton translocation (for every two electrons transferred, four hydrogen ions are translocated across the cytoplasmic membrane), and thus conserves the redox energy in a proton gradient. This subunit may bind ubiquinone. This is NADH-quinone oxidoreductase subunit H from Legionella pneumophila (strain Corby).